The chain runs to 309 residues: Serine/threonine-protein phosphatase 2A catalytic subunit beta isoform (309 aa).

The Mn(2+) site is built by D57, H59, D85, and N117. H118 serves as the catalytic Proton donor. Positions 167 and 241 each coordinate Mn(2+). Y307 carries the phosphotyrosine modification. At L309 the chain carries Leucine methyl ester.

It belongs to the PPP phosphatase family. PP-1 subfamily. In terms of assembly, PP2A consists of a common heterodimeric core enzyme (composed of a 36 kDa catalytic subunit (subunit C) and a 65 kDa constant regulatory subunit (PR65) (subunit A)) that associates with a variety of regulatory subunits. Proteins that associate with the core dimer include three families of regulatory subunits B (the R2/B/PR55/B55, R3/B''/PR72/PR130/PR59 and R5/B'/B56 families), the 48 kDa variable regulatory subunit, viral proteins, and cell signaling molecules. Binds PPME1. May indirectly interact with SGO1, most probably through regulatory B56 subunits. Found in a complex with at least ARL2, PPP2CB, PPP2R1A, PPP2R2A, PPP2R5E and TBCD. Interacts with TBCD. Interacts with CTTNBP2NL. Interacts with PTPA. Part of the core of STRIPAK complexes composed of PP2A catalytic and scaffolding subunits, the striatins (PP2A regulatory subunits), the striatin-associated proteins MOB4, STRIP1 and STRIP2, PDCD10 and members of the STE20 kinases, such as STK24 and STK26. Mn(2+) serves as cofactor. Post-translationally, reversibly methyl esterified on Leu-309 by leucine carboxyl methyltransferase 1 (LCMT1) and protein phosphatase methylesterase 1 (PPME1). Carboxyl methylation influences the affinity of the catalytic subunit for the different regulatory subunits, thereby modulating the PP2A holoenzyme's substrate specificity, enzyme activity and cellular localization. In terms of processing, phosphorylation of either threonine (by autophosphorylation-activated protein kinase) or tyrosine results in inactivation of the phosphatase. Auto-dephosphorylation has been suggested as a mechanism for reactivation. May be monoubiquitinated by NOSIP.

It localises to the cytoplasm. The protein resides in the nucleus. The protein localises to the chromosome. It is found in the centromere. Its subcellular location is the cytoskeleton. It localises to the spindle pole. The catalysed reaction is O-phospho-L-seryl-[protein] + H2O = L-seryl-[protein] + phosphate. The enzyme catalyses O-phospho-L-threonyl-[protein] + H2O = L-threonyl-[protein] + phosphate. In terms of biological role, catalytic subunit of protein phosphatase 2A (PP2A), a serine/threonine phosphatase involved in the regulation of a wide variety of enzymes, signal transduction pathways, and cellular events. PP2A can modulate the activity of phosphorylase B kinase, casein kinase 2, mitogen-stimulated S6 kinase, and MAP-2 kinase. Part of the striatin-interacting phosphatase and kinase (STRIPAK) complexes. STRIPAK complexes have critical roles in protein (de)phosphorylation and are regulators of multiple signaling pathways including Hippo, MAPK, nuclear receptor and cytoskeleton remodeling. Different types of STRIPAK complexes are involved in a variety of biological processes such as cell growth, differentiation, apoptosis, metabolism and immune regulation. In Bos taurus (Bovine), this protein is Serine/threonine-protein phosphatase 2A catalytic subunit beta isoform (PPP2CB).